The primary structure comprises 415 residues: Lipoyl synthase, apicoplast (415 aa).

The first 23 residues, 1-23, serve as a signal peptide directing secretion; the sequence is MHFGIPSLFYLYILFSIIMRIKC. 7 residues coordinate [4Fe-4S] cluster: C153, C158, C164, C179, C183, C186, and S394. In terms of domain architecture, Radical SAM core spans 165 to 383; the sequence is WNIGTATIML…KEEGLKMGFK (219 aa).

The protein belongs to the radical SAM superfamily. Lipoyl synthase family. [4Fe-4S] cluster is required as a cofactor.

The protein resides in the plastid. Its subcellular location is the apicoplast. It carries out the reaction [[Fe-S] cluster scaffold protein carrying a second [4Fe-4S](2+) cluster] + N(6)-octanoyl-L-lysyl-[protein] + 2 oxidized [2Fe-2S]-[ferredoxin] + 2 S-adenosyl-L-methionine + 4 H(+) = [[Fe-S] cluster scaffold protein] + N(6)-[(R)-dihydrolipoyl]-L-lysyl-[protein] + 4 Fe(3+) + 2 hydrogen sulfide + 2 5'-deoxyadenosine + 2 L-methionine + 2 reduced [2Fe-2S]-[ferredoxin]. It participates in protein modification; protein lipoylation via endogenous pathway; protein N(6)-(lipoyl)lysine from octanoyl-[acyl-carrier-protein]: step 2/2. Catalyzes the radical-mediated insertion of two sulfur atoms into the C-6 and C-8 positions of the octanoyl moiety bound to the lipoyl domains of lipoate-dependent enzymes, thereby converting the octanoylated domains into lipoylated derivatives. This chain is Lipoyl synthase, apicoplast, found in Plasmodium falciparum (isolate 3D7).